A 560-amino-acid polypeptide reads, in one-letter code: Dihydroxy-acid dehydratase (560 aa).

Aspartate 78 serves as a coordination point for Mg(2+). [2Fe-2S] cluster is bound at residue cysteine 119. The Mg(2+) site is built by aspartate 120 and lysine 121. Lysine 121 is modified (N6-carboxylysine). Residue cysteine 192 participates in [2Fe-2S] cluster binding. Glutamate 446 is a Mg(2+) binding site. Catalysis depends on serine 472, which acts as the Proton acceptor.

It belongs to the IlvD/Edd family. In terms of assembly, homodimer. The cofactor is [2Fe-2S] cluster. It depends on Mg(2+) as a cofactor.

The catalysed reaction is (2R)-2,3-dihydroxy-3-methylbutanoate = 3-methyl-2-oxobutanoate + H2O. The enzyme catalyses (2R,3R)-2,3-dihydroxy-3-methylpentanoate = (S)-3-methyl-2-oxopentanoate + H2O. It functions in the pathway amino-acid biosynthesis; L-isoleucine biosynthesis; L-isoleucine from 2-oxobutanoate: step 3/4. Its pathway is amino-acid biosynthesis; L-valine biosynthesis; L-valine from pyruvate: step 3/4. In terms of biological role, functions in the biosynthesis of branched-chain amino acids. Catalyzes the dehydration of (2R,3R)-2,3-dihydroxy-3-methylpentanoate (2,3-dihydroxy-3-methylvalerate) into 2-oxo-3-methylpentanoate (2-oxo-3-methylvalerate) and of (2R)-2,3-dihydroxy-3-methylbutanoate (2,3-dihydroxyisovalerate) into 2-oxo-3-methylbutanoate (2-oxoisovalerate), the penultimate precursor to L-isoleucine and L-valine, respectively. This chain is Dihydroxy-acid dehydratase, found in Anaeromyxobacter dehalogenans (strain 2CP-1 / ATCC BAA-258).